We begin with the raw amino-acid sequence, 415 residues long: Tyrosine--tRNA ligase (415 aa).

Residue Tyr-34 coordinates L-tyrosine. The short motif at 39-48 (PSADSLHLGN) is the 'HIGH' region element. L-tyrosine-binding residues include Tyr-162 and Gln-166. Residues 224–228 (KFGKS) carry the 'KMSKS' region motif. Lys-227 provides a ligand contact to ATP. Residues 346–413 (IKIIDLLNLA…KRNYFLILWN (68 aa)) enclose the S4 RNA-binding domain.

Belongs to the class-I aminoacyl-tRNA synthetase family. TyrS type 1 subfamily. Homodimer.

Its subcellular location is the cytoplasm. It catalyses the reaction tRNA(Tyr) + L-tyrosine + ATP = L-tyrosyl-tRNA(Tyr) + AMP + diphosphate + H(+). Functionally, catalyzes the attachment of tyrosine to tRNA(Tyr) in a two-step reaction: tyrosine is first activated by ATP to form Tyr-AMP and then transferred to the acceptor end of tRNA(Tyr). This chain is Tyrosine--tRNA ligase, found in Ureaplasma parvum serovar 3 (strain ATCC 27815 / 27 / NCTC 11736).